The following is a 500-amino-acid chain: L-arabinose isomerase (500 aa).

Glu-306, Glu-333, His-350, and His-450 together coordinate Mn(2+).

This sequence belongs to the arabinose isomerase family. In terms of assembly, homohexamer. It depends on Mn(2+) as a cofactor.

It carries out the reaction beta-L-arabinopyranose = L-ribulose. It functions in the pathway carbohydrate degradation; L-arabinose degradation via L-ribulose; D-xylulose 5-phosphate from L-arabinose (bacterial route): step 1/3. Catalyzes the conversion of L-arabinose to L-ribulose. This Yersinia pestis (strain Pestoides F) protein is L-arabinose isomerase.